A 1203-amino-acid chain; its full sequence is DNA-directed RNA polymerase subunit beta' (1203 aa).

Residues Cys60, Cys62, Cys75, and Cys78 each coordinate Zn(2+). Mg(2+) is bound by residues Asp449, Asp451, and Asp453. Zn(2+) contacts are provided by Cys818, Cys892, Cys899, and Cys902.

Belongs to the RNA polymerase beta' chain family. In terms of assembly, the RNAP catalytic core consists of 2 alpha, 1 beta, 1 beta' and 1 omega subunit. When a sigma factor is associated with the core the holoenzyme is formed, which can initiate transcription. It depends on Mg(2+) as a cofactor. Zn(2+) serves as cofactor.

The enzyme catalyses RNA(n) + a ribonucleoside 5'-triphosphate = RNA(n+1) + diphosphate. In terms of biological role, DNA-dependent RNA polymerase catalyzes the transcription of DNA into RNA using the four ribonucleoside triphosphates as substrates. This is DNA-directed RNA polymerase subunit beta' from Bacillus cereus (strain ZK / E33L).